Reading from the N-terminus, the 351-residue chain is Fruit bromelain (351 aa).

Positions 1-24 (MASKVQLVFLFLFLCAMWASPSAA) are cleaved as a signal peptide. The propeptide at 25 to 121 (SRDEPNDPMM…VVSFDDVNIS (97 aa)) is activation peptide. An N-linked (GlcNAc...) asparagine glycan is attached at Asn-119. 3 disulfides stabilise this stretch: Cys-144–Cys-184, Cys-178–Cys-217, and Cys-273–Cys-325. Cys-147 is an active-site residue. Catalysis depends on residues His-279 and Asn-300.

This sequence belongs to the peptidase C1 family.

It catalyses the reaction Hydrolysis of proteins with broad specificity for peptide bonds. Bz-Phe-Val-Arg-|-NHMec is a good synthetic substrate, but there is no action on Z-Arg-Arg-|-NHMec (cf. stem bromelain).. Cysteine proteinase with a high level of diversity in substrate specificity. The protein is Fruit bromelain of Ananas comosus (Pineapple).